The chain runs to 215 residues: Pyridoxine/pyridoxamine 5'-phosphate oxidase (215 aa).

Residues 8 to 11 and Lys-66 each bind substrate; that span reads RQEY. FMN is bound by residues 61-66, 76-77, Arg-82, Lys-83, and Gln-105; these read RIVLLK and YT. Substrate is bound by residues Tyr-123 and Arg-127. Residues 140-141 and Trp-186 contribute to the FMN site; that span reads QS. 192-194 is a substrate binding site; the sequence is RLH. Arg-196 serves as a coordination point for FMN.

The protein belongs to the pyridoxamine 5'-phosphate oxidase family. As to quaternary structure, homodimer. FMN is required as a cofactor.

It carries out the reaction pyridoxamine 5'-phosphate + O2 + H2O = pyridoxal 5'-phosphate + H2O2 + NH4(+). It catalyses the reaction pyridoxine 5'-phosphate + O2 = pyridoxal 5'-phosphate + H2O2. The protein operates within cofactor metabolism; pyridoxal 5'-phosphate salvage; pyridoxal 5'-phosphate from pyridoxamine 5'-phosphate: step 1/1. It functions in the pathway cofactor metabolism; pyridoxal 5'-phosphate salvage; pyridoxal 5'-phosphate from pyridoxine 5'-phosphate: step 1/1. In terms of biological role, catalyzes the oxidation of either pyridoxine 5'-phosphate (PNP) or pyridoxamine 5'-phosphate (PMP) into pyridoxal 5'-phosphate (PLP). This is Pyridoxine/pyridoxamine 5'-phosphate oxidase from Salinibacter ruber (strain DSM 13855 / M31).